The chain runs to 161 residues: Nucleotide-binding protein AZOSEA28950 (161 aa).

This sequence belongs to the YajQ family.

Nucleotide-binding protein. This chain is Nucleotide-binding protein AZOSEA28950, found in Aromatoleum aromaticum (strain DSM 19018 / LMG 30748 / EbN1) (Azoarcus sp. (strain EbN1)).